A 499-amino-acid chain; its full sequence is Lysosomal Pro-X carboxypeptidase (499 aa).

Positions 1–21 (MGRCSLLLLLLLIAFLTPGAA) are cleaved as a signal peptide. Positions 22-47 (NPVSPSLRAPSSLPWSTSFRSRPTIT) are excised as a propeptide. N-linked (GlcNAc...) asparagine glycosylation is present at Asn-103. Ser-181 serves as the catalytic Charge relay system. An SKS domain region spans residues 196 to 337 (HLVVGALASS…QNIFQALNVY (142 aa)). Disulfide bonds link Cys-217–Cys-375, Cys-235–Cys-313, Cys-266–Cys-346, and Cys-367–Cys-397. Asn-234 is a glycosylation site (N-linked (GlcNAc...) asparagine). N-linked (GlcNAc...) asparagine glycosylation is found at Asn-339 and Asn-348. N-linked (GlcNAc...) asparagine glycosylation occurs at Asn-418. Catalysis depends on charge relay system residues Asp-433 and His-458.

It belongs to the peptidase S28 family. In terms of assembly, homodimer.

The protein localises to the lysosome. The enzyme catalyses Cleavage of a -Pro-|-Xaa bond to release a C-terminal amino acid.. Cleaves C-terminal amino acids linked to proline in peptides such as angiotensin II, III and des-Arg9-bradykinin. This cleavage occurs at acidic pH, but enzymatic activity is retained with some substrates at neutral pH. This is Lysosomal Pro-X carboxypeptidase (PRCP) from Bos taurus (Bovine).